Consider the following 105-residue polypeptide: UPF0060 membrane protein Rmet_4032 (105 aa).

The next 4 helical transmembrane spans lie at 4-24 (VGLY…PYLW), 28-48 (GASP…AWLL), 60-80 (AAYG…VDGV), and 82-102 (PSPW…IIVF).

This sequence belongs to the UPF0060 family.

It localises to the cell inner membrane. The polypeptide is UPF0060 membrane protein Rmet_4032 (Cupriavidus metallidurans (strain ATCC 43123 / DSM 2839 / NBRC 102507 / CH34) (Ralstonia metallidurans)).